The primary structure comprises 237 residues: Ribose-5-phosphate isomerase A (237 aa).

Substrate-binding positions include 32–35 (TGRT), 85–88 (DGAD), and 99–102 (KGGG). Glu108 serves as the catalytic Proton acceptor. Residue Arg126 participates in substrate binding.

Belongs to the ribose 5-phosphate isomerase family. In terms of assembly, homodimer.

It catalyses the reaction aldehydo-D-ribose 5-phosphate = D-ribulose 5-phosphate. It participates in carbohydrate degradation; pentose phosphate pathway; D-ribose 5-phosphate from D-ribulose 5-phosphate (non-oxidative stage): step 1/1. Its function is as follows. Catalyzes the reversible conversion of ribose-5-phosphate to ribulose 5-phosphate. The chain is Ribose-5-phosphate isomerase A from Aeropyrum pernix (strain ATCC 700893 / DSM 11879 / JCM 9820 / NBRC 100138 / K1).